Reading from the N-terminus, the 290-residue chain is Cilia- and flagella-associated protein 298-A (290 aa).

Belongs to the CFAP298 family.

It localises to the cytoplasm. The protein resides in the cytoskeleton. The protein localises to the cilium basal body. Plays a role in motile cilium function, possibly by acting on outer dynein arm assembly. Seems to be important for initiation rather than maintenance of cilium motility. Required for correct positioning of the cilium at the apical cell surface, suggesting an additional role in the planar cell polarity (PCP) pathway. May suppress canonical Wnt signaling activity. The polypeptide is Cilia- and flagella-associated protein 298-A (cfap298-a) (Xenopus laevis (African clawed frog)).